Consider the following 185-residue polypeptide: Threonylcarbamoyl-AMP synthase (185 aa).

One can recognise a YrdC-like domain in the interval 3–185 (EQAPDEVQEI…VDAISGKVLR (183 aa)).

This sequence belongs to the SUA5 family. TsaC subfamily.

Its subcellular location is the cytoplasm. It catalyses the reaction L-threonine + hydrogencarbonate + ATP = L-threonylcarbamoyladenylate + diphosphate + H2O. Required for the formation of a threonylcarbamoyl group on adenosine at position 37 (t(6)A37) in tRNAs that read codons beginning with adenine. Catalyzes the conversion of L-threonine, HCO(3)(-)/CO(2) and ATP to give threonylcarbamoyl-AMP (TC-AMP) as the acyladenylate intermediate, with the release of diphosphate. This Shewanella sediminis (strain HAW-EB3) protein is Threonylcarbamoyl-AMP synthase.